The primary structure comprises 55 residues: Large ribosomal subunit protein bL33 (55 aa).

Belongs to the bacterial ribosomal protein bL33 family.

In Methylacidiphilum infernorum (isolate V4) (Methylokorus infernorum (strain V4)), this protein is Large ribosomal subunit protein bL33.